A 439-amino-acid polypeptide reads, in one-letter code: Sodium-dependent phosphate transport protein 3 (439 aa).

4 N-linked (GlcNAc...) asparagine glycosylation sites follow: Asn47, Asn56, Asn68, and Asn69. The next 9 helical transmembrane spans lie at 98-118 (INYGIILTLIPSGYLAGIFGA), 130-150 (SLLTLFTPLAADFGVILVIMV), 183-203 (TIAGSGSAFGSFIILCVGGLI), 211-231 (FIFYIFGSTGCVCCLLWFTVI), 273-293 (LPLWAIFLGFFSHFWLCTIIL), 317-337 (LPFIAAASCTILGGQLADFLL), 350-369 (LFSSLGLLLPSICAVALPFV), 374-396 (VITIILLILIPGTSNLCDSGFII), and 415-435 (GFGLIAGIISSTATGFLISQV).

Belongs to the major facilitator superfamily. Sodium/anion cotransporter family. In terms of tissue distribution, expressed in the small intestine, kidney, spleen and testis. Not detected in fetal brain, bone marrow, and mammary gland.

It is found in the apical cell membrane. The catalysed reaction is 3 Na(+)(out) + phosphate(out) = 3 Na(+)(in) + phosphate(in). It catalyses the reaction urate(out) + n chloride(in) = urate(in) + n chloride(out). In terms of biological role, acts as a membrane potential-dependent organic anion transporter, the transport requires a low concentration of chloride ions. Mediates chloride-dependent transport of urate. Can actively transport inorganic phosphate into cells via Na(+) cotransport. This chain is Sodium-dependent phosphate transport protein 3 (SLC17A2), found in Homo sapiens (Human).